A 469-amino-acid polypeptide reads, in one-letter code: Acetyl-CoA decarbonylase/synthase complex subunit beta 2 (469 aa).

[Ni-Fe-S] cluster contacts are provided by cysteine 187, cysteine 190, cysteine 276, and cysteine 278.

Belongs to the CdhC family. As to quaternary structure, monomer. The ACDS complex is made up of alpha, epsilon, beta, gamma and delta chains with a probable stoichiometry of (alpha(2)epsilon(2))(4)-beta(8)-(gamma(1)delta(1))(8) (Potential). [Ni-Fe-S] cluster is required as a cofactor.

The catalysed reaction is Co(I)-[corrinoid Fe-S protein] + acetyl-CoA + H(+) = methyl-Co(III)-[corrinoid Fe-S protein] + CO + CoA. In terms of biological role, part of a complex that catalyzes the reversible cleavage of acetyl-CoA, allowing autotrophic growth from CO(2). The alpha-epsilon complex generates CO from CO(2), while the beta subunit (this protein) combines the CO with CoA and a methyl group to form acetyl-CoA. The methyl group, which is incorporated into acetyl-CoA, is transferred to the beta subunit by a corrinoid iron-sulfur protein (the gamma-delta complex). This is Acetyl-CoA decarbonylase/synthase complex subunit beta 2 (cdhC2) from Methanocaldococcus jannaschii (strain ATCC 43067 / DSM 2661 / JAL-1 / JCM 10045 / NBRC 100440) (Methanococcus jannaschii).